Consider the following 464-residue polypeptide: Argininosuccinate lyase (464 aa).

It belongs to the lyase 1 family. Argininosuccinate lyase subfamily.

It localises to the cytoplasm. It carries out the reaction 2-(N(omega)-L-arginino)succinate = fumarate + L-arginine. The protein operates within amino-acid biosynthesis; L-arginine biosynthesis; L-arginine from L-ornithine and carbamoyl phosphate: step 3/3. This Pseudomonas paraeruginosa (strain DSM 24068 / PA7) (Pseudomonas aeruginosa (strain PA7)) protein is Argininosuccinate lyase.